The following is a 407-amino-acid chain: S-adenosylmethionine synthase (407 aa).

His-21 is a binding site for ATP. Position 23 (Asp-23) interacts with Mg(2+). A K(+)-binding site is contributed by Glu-49. Residues Glu-62 and Gln-105 each coordinate L-methionine. Residues 105–115 (QSQEIGAGVDA) form a flexible loop region. ATP contacts are provided by residues 179–181 (DGK), Asp-259, 265–266 (RK), Ala-282, and Lys-286. An L-methionine-binding site is contributed by Asp-259. Lys-290 contributes to the L-methionine binding site.

The protein belongs to the AdoMet synthase family. In terms of assembly, homotetramer; dimer of dimers. Mg(2+) is required as a cofactor. The cofactor is K(+).

Its subcellular location is the cytoplasm. It catalyses the reaction L-methionine + ATP + H2O = S-adenosyl-L-methionine + phosphate + diphosphate. It participates in amino-acid biosynthesis; S-adenosyl-L-methionine biosynthesis; S-adenosyl-L-methionine from L-methionine: step 1/1. Functionally, catalyzes the formation of S-adenosylmethionine (AdoMet) from methionine and ATP. The overall synthetic reaction is composed of two sequential steps, AdoMet formation and the subsequent tripolyphosphate hydrolysis which occurs prior to release of AdoMet from the enzyme. This chain is S-adenosylmethionine synthase, found in Corynebacterium aurimucosum (strain ATCC 700975 / DSM 44827 / CIP 107346 / CN-1) (Corynebacterium nigricans).